A 351-amino-acid polypeptide reads, in one-letter code: Tryptophan--tRNA ligase (351 aa).

ATP-binding positions include 11–13 and 19–20; these read RPT and GH. A 'HIGH' region motif is present at residues 12–20; it reads PTGALHLGH. L-tryptophan is bound at residue Asp-139. Residues 151–153, Leu-190, and 198–202 each bind ATP; these read GRD and KMSKS. The 'KMSKS' region signature appears at 198 to 202; it reads KMSKS.

This sequence belongs to the class-I aminoacyl-tRNA synthetase family. In terms of assembly, homodimer.

Its subcellular location is the cytoplasm. The catalysed reaction is tRNA(Trp) + L-tryptophan + ATP = L-tryptophyl-tRNA(Trp) + AMP + diphosphate + H(+). In terms of biological role, catalyzes the attachment of tryptophan to tRNA(Trp). This is Tryptophan--tRNA ligase from Borreliella burgdorferi (strain ATCC 35210 / DSM 4680 / CIP 102532 / B31) (Borrelia burgdorferi).